A 285-amino-acid polypeptide reads, in one-letter code: Polyamine aminopropyltransferase (285 aa).

The PABS domain occupies 5–241; the sequence is DTWFTEHFQT…GWWSVTLSSK (237 aa). An S-methyl-5'-thioadenosine-binding site is contributed by Gln-35. Spermidine contacts are provided by His-66 and Asp-90. S-methyl-5'-thioadenosine contacts are provided by residues Asp-110 and 141-142; that span reads DG. Catalysis depends on Asp-160, which acts as the Proton acceptor. Position 160–163 (160–163) interacts with spermidine; the sequence is DSTD. Pro-167 provides a ligand contact to S-methyl-5'-thioadenosine.

This sequence belongs to the spermidine/spermine synthase family. Homodimer or homotetramer.

Its subcellular location is the cytoplasm. The catalysed reaction is S-adenosyl 3-(methylsulfanyl)propylamine + putrescine = S-methyl-5'-thioadenosine + spermidine + H(+). It participates in amine and polyamine biosynthesis; spermidine biosynthesis; spermidine from putrescine: step 1/1. Its function is as follows. Catalyzes the irreversible transfer of a propylamine group from the amino donor S-adenosylmethioninamine (decarboxy-AdoMet) to putrescine (1,4-diaminobutane) to yield spermidine. In Xylella fastidiosa (strain Temecula1 / ATCC 700964), this protein is Polyamine aminopropyltransferase.